A 222-amino-acid polypeptide reads, in one-letter code: Pectate lyase A (222 aa).

Positions 1–26 (MKKMLTLLLSAGLVASIFGVMPAAAA) are cleaved as a signal peptide.

This sequence belongs to the polysaccharide lyase 3 family. It depends on Ca(2+) as a cofactor.

The protein resides in the secreted. The enzyme catalyses Eliminative cleavage of (1-&gt;4)-alpha-D-galacturonan to give oligosaccharides with 4-deoxy-alpha-D-galact-4-enuronosyl groups at their non-reducing ends.. The catalysed reaction is Eliminative cleavage of (1-&gt;4)-alpha-D-galacturonan methyl ester to give oligosaccharides with 4-deoxy-6-O-methyl-alpha-D-galact-4-enuronosyl groups at their non-reducing ends.. It participates in glycan metabolism; pectin degradation. In terms of biological role, catalyzes the depolymerization of both polygalacturonate and pectins with low (20-34%) and high (90%) levels of methyl esterification, with an endo mode of action. In contrast to the majority of pectate lyases, displays high activity on highly methylated pectins. Does not show xylanase and cellulase activity. The chain is Pectate lyase A from Paenibacillus amylolyticus.